A 383-amino-acid chain; its full sequence is MKNVLPPFIEIYRALIATPSISATEASLDQSNASLITLLAGWFSDLGFNVEVQPVPGTRNKFNMLASSGHGAGGLLLAGHTDTVPFDDGRWTRDPFTLTEHDNKLYGLGTADMKGFFAFILDALRAVDVTQLKKPLYILATADEETSMAGARYFSETTALRPDCAIIGEPTSLQPIRAHKGHISNVVRVLGQSGHSSDPARGVNAIELMHDAIGHIMQLRDSLKARYHYEAFTVPYPTLNLGHIHGGDASNRICACCELHMDIRPLPGMTLNDLNGLLNDALAPVSERWPGRLTVAELHPPIPGYECPPDHQLVEVVEKLLGTKTDVVNYCTEAPFMQTLCPTLVLGPGSINQAHQPDEYLETRFIKPTRELITQVVHHFCWH.

His-80 is a Zn(2+) binding site. Residue Asp-82 is part of the active site. Asp-112 is a Zn(2+) binding site. Glu-144 is an active-site residue. The Zn(2+) site is built by Glu-145, Glu-169, and His-355.

Belongs to the peptidase M20A family. ArgE subfamily. In terms of assembly, homodimer. Zn(2+) serves as cofactor. Co(2+) is required as a cofactor. The cofactor is glutathione.

It localises to the cytoplasm. It catalyses the reaction N(2)-acetyl-L-ornithine + H2O = L-ornithine + acetate. It functions in the pathway amino-acid biosynthesis; L-arginine biosynthesis; L-ornithine from N(2)-acetyl-L-ornithine (linear): step 1/1. In terms of biological role, catalyzes the hydrolysis of the amide bond of N(2)-acetylated L-amino acids. Cleaves the acetyl group from N-acetyl-L-ornithine to form L-ornithine, an intermediate in L-arginine biosynthesis pathway, and a branchpoint in the synthesis of polyamines. The sequence is that of Acetylornithine deacetylase from Salmonella arizonae (strain ATCC BAA-731 / CDC346-86 / RSK2980).